Consider the following 268-residue polypeptide: 4-hydroxy-tetrahydrodipicolinate reductase (268 aa).

NAD(+) contacts are provided by residues 8-13 (GGGGKM) and glutamate 34. Lysine 35 is an NADP(+) binding site. NAD(+)-binding positions include 98 to 100 (GST) and 122 to 125 (APNM). Histidine 155 (proton donor/acceptor) is an active-site residue. Histidine 156 provides a ligand contact to (S)-2,3,4,5-tetrahydrodipicolinate. Lysine 159 (proton donor) is an active-site residue. Residue 165 to 166 (GT) coordinates (S)-2,3,4,5-tetrahydrodipicolinate.

It belongs to the DapB family.

It localises to the cytoplasm. It catalyses the reaction (S)-2,3,4,5-tetrahydrodipicolinate + NAD(+) + H2O = (2S,4S)-4-hydroxy-2,3,4,5-tetrahydrodipicolinate + NADH + H(+). The catalysed reaction is (S)-2,3,4,5-tetrahydrodipicolinate + NADP(+) + H2O = (2S,4S)-4-hydroxy-2,3,4,5-tetrahydrodipicolinate + NADPH + H(+). It functions in the pathway amino-acid biosynthesis; L-lysine biosynthesis via DAP pathway; (S)-tetrahydrodipicolinate from L-aspartate: step 4/4. In terms of biological role, catalyzes the conversion of 4-hydroxy-tetrahydrodipicolinate (HTPA) to tetrahydrodipicolinate. The polypeptide is 4-hydroxy-tetrahydrodipicolinate reductase (Syntrophus aciditrophicus (strain SB)).